The chain runs to 462 residues: BBSome complex member bbs-4 (462 aa).

The segment at 1-46 (MEASNQDEIIGTDVIPNEQDNPEEVVPEPTSLDVPPPPPERAPSAP) is disordered. TPR repeat units follow at residues 89-122 (EAAF…SGKN), 124-156 (RYFY…MKDN), 199-232 (ATLI…QPDN), 234-266 (EVMN…DPAN), 268-300 (QAIL…SDYN), 335-368 (YKIS…YPQN), and 369-402 (AKAV…KKNP).

The protein belongs to the BBS4 family. In terms of assembly, part of BBSome complex, that contains at least bbs-1, bbs-2, bbs-4, bbs-5, osm-12, bbs-8/ttc-8 and bbs-9. Interacts (via C-terminus) with bbs-5; the interaction is direct.

The protein localises to the cytoplasm. The protein resides in the cytoskeleton. Its subcellular location is the microtubule organizing center. It localises to the centrosome. It is found in the cell projection. The protein localises to the cilium membrane. In terms of biological role, component of the BBSome complex. The BBSome complex is thought to function as a coat complex required for sorting of specific membrane proteins to the primary cilia. The BBSome complex is required for ciliogenesis but is dispensable for centriolar satellite function. Required for proper BBSome complex assembly and its ciliary localization. May be required for microtubule anchoring at the centrosome but not for microtubule nucleation. May be required for the dynein-mediated transport of pericentriolar proteins to the centrosome. Required, redundantly with bbs-5, for cilia biogenesis and both the assembly and movement of intraflagellar transport proteins along the ciliary axoneme. Plays a role in the removal of degraded mechanosensory receptors within the cilia. This Caenorhabditis elegans protein is BBSome complex member bbs-4.